A 123-amino-acid chain; its full sequence is Large ribosomal subunit protein uL18 (123 aa).

It belongs to the universal ribosomal protein uL18 family. Part of the 50S ribosomal subunit; part of the 5S rRNA/L5/L18/L25 subcomplex. Contacts the 5S and 23S rRNAs.

This is one of the proteins that bind and probably mediate the attachment of the 5S RNA into the large ribosomal subunit, where it forms part of the central protuberance. The protein is Large ribosomal subunit protein uL18 of Bifidobacterium adolescentis (strain ATCC 15703 / DSM 20083 / NCTC 11814 / E194a).